We begin with the raw amino-acid sequence, 379 residues long: Cytochrome b (379 aa).

The next 4 helical transmembrane spans lie at 33-53, 77-98, 113-133, and 178-198; these read FGSL…FLAM, WLIR…FIHV, WNIG…GYVL, and FFAF…VHLL. The heme b site is built by His-83 and His-97. Positions 182 and 196 each coordinate heme b. Residue His-201 participates in a ubiquinone binding. Transmembrane regions (helical) follow at residues 226 to 246, 288 to 308, 320 to 340, and 347 to 367; these read IKDL…ALFF, LGGV…PLLN, VTQT…WIGG, and FTMI…VLMP.

It belongs to the cytochrome b family. The cytochrome bc1 complex contains 11 subunits: 3 respiratory subunits (MT-CYB, CYC1 and UQCRFS1), 2 core proteins (UQCRC1 and UQCRC2) and 6 low-molecular weight proteins (UQCRH/QCR6, UQCRB/QCR7, UQCRQ/QCR8, UQCR10/QCR9, UQCR11/QCR10 and a cleavage product of UQCRFS1). This cytochrome bc1 complex then forms a dimer. Requires heme b as cofactor.

Its subcellular location is the mitochondrion inner membrane. Component of the ubiquinol-cytochrome c reductase complex (complex III or cytochrome b-c1 complex) that is part of the mitochondrial respiratory chain. The b-c1 complex mediates electron transfer from ubiquinol to cytochrome c. Contributes to the generation of a proton gradient across the mitochondrial membrane that is then used for ATP synthesis. The polypeptide is Cytochrome b (MT-CYB) (Akodon iniscatus (Intelligent grass mouse)).